A 337-amino-acid polypeptide reads, in one-letter code: Cysteine synthase 3 (337 aa).

Lysine 47 bears the N6-(pyridoxal phosphate)lysine mark. Pyridoxal 5'-phosphate is bound by residues asparagine 78, 182–186 (GSSGT), and serine 270.

This sequence belongs to the cysteine synthase/cystathionine beta-synthase family. As to quaternary structure, homodimer. Pyridoxal 5'-phosphate is required as a cofactor.

It catalyses the reaction O-acetyl-L-serine + hydrogen sulfide = L-cysteine + acetate. Its pathway is amino-acid biosynthesis; L-cysteine biosynthesis; L-cysteine from L-serine: step 2/2. Primarily catalyzes the formation of cysteine and acetate from O-acetylserine and hydrogen sulfide. Can also catalyze the formation of cysteine and acetate from S-sulfocysteine and hydrogen sulfide and the formation of cyanoalanine and hydrogen sulfide from either S-sulfocysteine or O-acetylserine and hydrogen cyanide. In Caenorhabditis elegans, this protein is Cysteine synthase 3.